We begin with the raw amino-acid sequence, 172 residues long: Melanocortin-2 receptor accessory protein (172 aa).

A helical membrane pass occupies residues 38 to 58 (IVIAFWVSLAAFVVLLFLILL). 2 disordered regions span residues 105-130 (QAQA…SSST) and 152-172 (PLVR…QLQS).

The protein belongs to the MRAP family. In terms of assembly, homodimer and heterodimer. Forms antiparallel homodimers and heterodimers with MRAP2. Interacts with MC1R, MC2R, MC3R, MC4R and MC5R.

Its subcellular location is the cell membrane. It localises to the endoplasmic reticulum membrane. Functionally, modulator of melanocortin receptors (MC1R, MC2R, MC3R, MC4R and MC5R). Acts by increasing ligand-sensitivity of melanocortin receptors and enhancing generation of cAMP by the receptors. Required both for MC2R trafficking to the cell surface of adrenal cells and for signaling in response to corticotropin (ACTH). May be involved in the intracellular trafficking pathways in adipocyte cells. The protein is Melanocortin-2 receptor accessory protein (MRAP) of Pan troglodytes (Chimpanzee).